The chain runs to 2210 residues: Filamin-A (2210 aa).

Calponin-homology (CH) domains lie at 15 to 120 and 139 to 242; these read KIQQ…LHYS and HTPK…NSKL. 20 Filamin repeats span residues 249-347, 349-447, 448-544, 545-635, 638-734, 735-831, 832-929, 930-1022, 1023-1121, 1122-1217, 1218-1312, 1322-1423, 1424-1515, 1516-1603, 1606-1698, 1699-1796, 1799-1891, 1893-1986, 1988-2079, and 2116-2210; these read RPKT…PVKV, GHAG…PVKV, APLS…EVKV, GPKK…IAQI, RTDF…RVYV, GVPV…VVVE, QTVD…VVNV, KSGC…RVLV, EETV…VMTV, FPKS…KLEA, FPTG…SIKA, SEYI…KFHV, DSIT…FAKI, TGEG…KVTV, REVG…TVKV, AGEG…QFTV, LRDS…KVYV, PDAG…RIKV, KDVA…KVNA, and TFKS…QIDV.

The protein belongs to the filamin family. As to quaternary structure, interacts with Ten-m. In terms of tissue distribution, germline-specific in females (at protein level). Expressed in ovary.

It is found in the cytoplasm. The protein localises to the cytoskeleton. It localises to the cell membrane. Involved in the germline ring canal formation. May tether actin microfilament within the ovarian ring canal to the cell membrane. Contributes to actin microfilaments organization. In Drosophila melanogaster (Fruit fly), this protein is Filamin-A (cher).